The following is a 61-amino-acid chain: UPF0434 protein PSEEN1604 (61 aa).

It belongs to the UPF0434 family.

This Pseudomonas entomophila (strain L48) protein is UPF0434 protein PSEEN1604.